The chain runs to 352 residues: Molybdenum import ATP-binding protein ModC (352 aa).

The ABC transporter domain maps to 1–229; it reads MLELNFSQTL…SVMNPWLPKE (229 aa). 31–38 is an ATP binding site; the sequence is GVSGAGKT. The 64-residue stretch at 289 to 352 folds into the Mop domain; that stretch reads QTSIRNVLRA…AQIKSVSITA (64 aa).

The protein belongs to the ABC transporter superfamily. Molybdate importer (TC 3.A.1.8) family. As to quaternary structure, the complex is composed of two ATP-binding proteins (ModC), two transmembrane proteins (ModB) and a solute-binding protein (ModA).

Its subcellular location is the cell inner membrane. The enzyme catalyses molybdate(out) + ATP + H2O = molybdate(in) + ADP + phosphate + H(+). In terms of biological role, part of the ABC transporter complex ModABC involved in molybdenum import. Responsible for energy coupling to the transport system. The protein is Molybdenum import ATP-binding protein ModC of Escherichia coli (strain K12).